The chain runs to 205 residues: Small ribosomal subunit protein uS4 (205 aa).

A disordered region spans residues 20 to 44 (WGRPKSPVNRREYGPGQHGQRRKGK). Positions 94–154 (SRLDAIVYRS…ERSKQLLLVL (61 aa)) constitute an S4 RNA-binding domain.

This sequence belongs to the universal ribosomal protein uS4 family. As to quaternary structure, part of the 30S ribosomal subunit. Contacts protein S5. The interaction surface between S4 and S5 is involved in control of translational fidelity.

One of the primary rRNA binding proteins, it binds directly to 16S rRNA where it nucleates assembly of the body of the 30S subunit. Functionally, with S5 and S12 plays an important role in translational accuracy. The sequence is that of Small ribosomal subunit protein uS4 from Bartonella bacilliformis (strain ATCC 35685 / KC583 / Herrer 020/F12,63).